Consider the following 481-residue polypeptide: Protein FAM83E (481 aa).

The DUF1669 stretch occupies residues 1–296 (MAASQLAALE…LYAASRPLSA (296 aa)). Residues 351 to 481 (KQETPTTTGP…ASGSGSGRRR (131 aa)) are disordered. A compositionally biased stretch (low complexity) spans 371–385 (RTRTTSGPPTRPSRS). 2 stretches are compositionally biased toward polar residues: residues 391–400 (RLSQLSGSSD) and 465–474 (NATTSDWASG).

It belongs to the FAM83 family. Directly interacts (via DUF1669) with CSNK1A1, CSNK1A1L, CSNK1D and CSNK1E. May interact with RAF1.

The protein localises to the cytoplasm. It localises to the perinuclear region. In terms of biological role, may play a role in MAPK signaling. The sequence is that of Protein FAM83E from Mus musculus (Mouse).